Consider the following 260-residue polypeptide: MTTLSPDHLKTLEQSRQRLIQLTHSLGSLITSLNQSDPLPTWSSLQTQASIISNNLQSISTHLSENHELLRSISALPAPEFPTKTHANTLEQLLRTKLDPRVEDWVSRGRKADNSAIQGSSGSTGMFSTLPSASAAGMNAGVVGAGAGGRLSEDDLAALWEWAPVEANSEARRRNWGGNFTLEEKERGIQQVVAELGLKRVLEDDDESEEEDEEMDVGFGGRIDGAPDNAGAAAGEHALPLVPINEILRYMTTGVMPAVR.

It belongs to the Mediator complex subunit 8 family. Component of the Mediator complex.

It is found in the nucleus. Its function is as follows. Component of the Mediator complex, a coactivator involved in the regulated transcription of nearly all RNA polymerase II-dependent genes. Mediator functions as a bridge to convey information from gene-specific regulatory proteins to the basal RNA polymerase II transcription machinery. Mediator is recruited to promoters by direct interactions with regulatory proteins and serves as a scaffold for the assembly of a functional preinitiation complex with RNA polymerase II and the general transcription factors. The protein is Mediator of RNA polymerase II transcription subunit 8 (med8) of Emericella nidulans (strain FGSC A4 / ATCC 38163 / CBS 112.46 / NRRL 194 / M139) (Aspergillus nidulans).